Consider the following 343-residue polypeptide: Histone H1.8 (343 aa).

Over residues 1 to 32 (MAPGSIASSDTSSSTSSSSTSSASSASAEGSS) the composition is skewed to low complexity. Disordered stretches follow at residues 1–50 (MAPG…VRAP) and 122–343 (ATGS…EAEG). The region spanning 52–130 (RHPPVLRMVL…GATGSFKLVP (79 aa)) is the H15 domain. Basic residues predominate over residues 132–142 (DKRKIPPRKTA). Basic and acidic residues-rich tracts occupy residues 150 to 183 (EGKD…ERAA), 199 to 219 (QTKD…RPDK), and 235 to 247 (KVKE…ADTK). Residues 161-176 (KKDPANTVEVKKGSRK) carry the Nuclear localization signal motif. A compositionally biased stretch (polar residues) spans 253 to 265 (QPGSQSSKSTVTK).

Belongs to the histone H1/H5 family. In terms of tissue distribution, oocyte (at protein level).

The protein resides in the cytoplasm. The protein localises to the nucleus. Its subcellular location is the chromosome. Its function is as follows. May play a key role in the control of gene expression during oogenesis and early embryogenesis, presumably through the perturbation of chromatin structure. Essential for meiotic maturation of germinal vesicle-stage oocytes. The somatic type linker histone H1c is rapidly replaced by H1oo in a donor nucleus transplanted into an oocyte. The greater mobility of H1oo as compared to H1c may contribute to this rapid replacement and increased instability of the embryonic chromatin structure. The rapid replacement of H1c with H1oo may play an important role in nuclear remodeling. The chain is Histone H1.8 from Bos taurus (Bovine).